The primary structure comprises 66 residues: Large ribosomal subunit protein bL35 (66 aa).

This sequence belongs to the bacterial ribosomal protein bL35 family.

This Leptospira biflexa serovar Patoc (strain Patoc 1 / Ames) protein is Large ribosomal subunit protein bL35.